The primary structure comprises 498 residues: MGQIVTMFEALPHIIDEVINIVIIVLIIITSIKAVYNFATCGILALVSFLFLAGRSCGMYGLNGPDIYKGVYQFKSVEFDMSHLNLTMPNACSVNNSHHYISMGSSGLEPTFTNDSILNHNFCNLTSALNKKSFDHTLMSIVSSLHLSIRGNSNYKAVSCDFNNGITIQYNLSSSDPQSAMSQCRTFRGRVLDMFRTAFGGKYMRSGWGWTGSDGKTTWCSQTSYQYLIIQNRTWENHCRYAGPFGMSRILFAQEKTKFLTRRLSGTFTWTLSDSSGVENPGGYCLTKWMILAAELKCFGNTAVAKCNVNHDEEFCDMLRLIDYNKAALSKFKQDVESALHVFKTTLNSLISDQLLMRNHLRDLMGVPYCNYSKFWYLEHAKTGETSVPKCWLVTNGSYLNETHFSDQIEQEADNMITEMLRKDYIKRQGSTPLALMDLLMFSTSAYLISIFLHFVRIPTHRHIKGGSCPKPHRLTNKGICSCGAFKVPGVKTIWKRR.

G2 carries the N-myristoyl glycine; by host lipid modification. The Extracellular portion of the chain corresponds to 2 to 17 (GQIVTMFEALPHIIDE). A helical transmembrane segment spans residues 18-33 (VINIVIIVLIIITSIK). Residues 34 to 58 (AVYNFATCGILALVSFLFLAGRSCG) lie on the Cytoplasmic side of the membrane. Zn(2+) is bound at residue C57. Residues 59 to 438 (MYGLNGPDIY…QGSTPLALMD (380 aa)) lie on the Extracellular side of the membrane. Residues N85, N95, N114, N124, and N171 are each glycosylated (N-linked (GlcNAc...) asparagine; by host). 6 cysteine pairs are disulfide-bonded: C92-C239, C123-C160, C184-C220, C285-C298, C307-C316, and C370-C391. N232 carries N-linked (GlcNAc...) asparagine; by host glycosylation. N371, N396, and N401 each carry an N-linked (GlcNAc...) asparagine; by host glycan. The chain crosses the membrane as a helical span at residues 439-459 (LLMFSTSAYLISIFLHFVRIP). At 460–498 (THRHIKGGSCPKPHRLTNKGICSCGAFKVPGVKTIWKRR) the chain is on the cytoplasmic side. 6 residues coordinate Zn(2+): H461, H463, C469, H473, C481, and C483.

The protein belongs to the arenaviridae GPC protein family. Interacts with glycoprotein G2. Part of the GP complex (GP-C) together with glycoprotein G1 and glycoprotein G2. The GP-complex interacts with protein Z, which interacts with ribonucleocapsid; these interactions may induce virion budding. As to quaternary structure, homotrimer; disulfide-linked. In pre-fusion state, G1 homotrimers bind G2 homotrimers via ionic interactions. Part of the GP complex (GP-C) together with glycoprotein G2 and the stable signal peptide. Interacts with the primary host receptor DAG1 on the cell surface. The GP-complex interacts with protein Z, which interacts with ribonucleocapsid; these interactions may induce virion budding. In terms of assembly, homotrimer. Interacts with the stable signal peptide. In pre-fusion state, G2 homotrimers bind G1 homotrimers via ionic interactions. Part of the GP complex (GP-C) together with glycoprotein G1 and the stable signal peptide. Acidification in the endosome triggers rearrangements, which ultimately leads to a 6 helix bundle formed by the two heptad repeat domains (HR1 and HR2) in post-fusion state. The GP-complex interacts with protein Z, which interacts with ribonucleocapsid; these interactions may induce virion budding. Post-translationally, specific enzymatic cleavages in vivo yield mature proteins. GP-C polyprotein is cleaved in the endoplasmic reticulum by the host protease MBTPS1. Only cleaved glycoprotein is incorporated into virions. The SSP remains stably associated with the GP complex following cleavage by signal peptidase and plays crucial roles in the trafficking of GP through the secretory pathway. In terms of processing, myristoylation is necessary for GP2-mediated fusion activity.

The protein resides in the virion membrane. It is found in the host endoplasmic reticulum membrane. The protein localises to the host Golgi apparatus membrane. Its subcellular location is the host cell membrane. Functions as a cleaved signal peptide that is retained as the third component of the GP complex (GP-C). Helps to stabilize the spike complex in its native conformation. The SSP is required for efficient glycoprotein expression, post-translational maturation cleavage of G1 and G2, glycoprotein transport to the cell surface plasma membrane, formation of infectious virus particles, and acid pH-dependent glycoprotein-mediated cell fusion. Functionally, forms the virion spikes together with glycoprotein G2. The glycoprotein spike trimers are connected to the underlying matrix. Interacts with the host receptor. Mediates virus attachment to the host primary receptor alpha-dystroglycan DAG1 (alpha-DG) at the cell surface. Down-modulates host DAG1. Its function is as follows. Forms the virion spikes together with glycoprotein G1. The glycoprotein spike trimers are connected to the underlying matrix. Class I viral fusion protein that directs fusion of viral and host endosomal membranes, leading to delivery of the nucleocapsid into the cytoplasm. Membrane fusion is mediated by irreversible conformational changes induced by acidification. This is Pre-glycoprotein polyprotein GP complex from Homo sapiens (Human).